Consider the following 67-residue polypeptide: MARWNVCSYCGKEFEPGTGKMYVRNDGRVYFFCSRKCEKYFFMGRNPRKLKWTKAFEEAKLQRAKRK.

Residues Cys7, Cys10, Cys33, and Cys37 each coordinate Zn(2+). Residues 7-37 (CSYCGKEFEPGTGKMYVRNDGRVYFFCSRKC) form a C4-type zinc finger.

The protein belongs to the eukaryotic ribosomal protein eL24 family. As to quaternary structure, part of the 50S ribosomal subunit. Forms a cluster with proteins L3 and L14. It depends on Zn(2+) as a cofactor.

In terms of biological role, binds to the 23S rRNA. The polypeptide is Large ribosomal subunit protein eL24 (Thermococcus sibiricus (strain DSM 12597 / MM 739)).